A 606-amino-acid polypeptide reads, in one-letter code: CDPK-related kinase 8 (606 aa).

The span at 1–14 (MGGCTSKPSTSSGR) shows a compositional bias: polar residues. The interval 1–132 (MGGCTSKPST…TEVPQREEEE (132 aa)) is disordered. A lipid anchor (N-myristoyl glycine) is attached at G2. Residues 98–110 (KHIRAALRRRKGK) are compositionally biased toward basic residues. The 263-residue stretch at 150-412 (VELGEEIGRG…ASQALMHPWI (263 aa)) folds into the Protein kinase domain. ATP-binding positions include 156–164 (IGRGHFGYT) and K182. D278 serves as the catalytic Proton acceptor. S318 bears the Phosphoserine mark. Positions 418 to 448 (DMNIPFDILIFRQMKAYLRSSSLRKAALRAL) are autoinhibitory domain. The segment at 437-457 (SSSLRKAALRALSKTLIKDEI) is calmodulin binding (CaMBD). EF-hand domains follow at residues 455–491 (DEIL…ATEA), 492–527 (MKES…VHQH), 528–567 (ESLD…GPSI), and 570–599 (HSVL…VSVR). Residues N470, D472, E516, D545, N547, N549, E556, D581, and K583 each contribute to the Ca(2+) site. The residue at position 585 (S585) is a Phosphoserine.

The protein belongs to the protein kinase superfamily. Ser/Thr protein kinase family. CDPK subfamily. In terms of assembly, binds calmodulin (CaM) in a calcium-dependent manner. Autophosphorylated.

The protein resides in the membrane. It carries out the reaction L-seryl-[protein] + ATP = O-phospho-L-seryl-[protein] + ADP + H(+). It catalyses the reaction L-threonyl-[protein] + ATP = O-phospho-L-threonyl-[protein] + ADP + H(+). With respect to regulation, activated by calcium and calmodulin. Autophosphorylation may play an important role in the regulation of the kinase activity. May play a role in signal transduction pathways that involve calcium as a second messenger. This chain is CDPK-related kinase 8 (CRK8), found in Arabidopsis thaliana (Mouse-ear cress).